A 149-amino-acid polypeptide reads, in one-letter code: MKSTLRISLKSGERIFVNGAVLRVDRKVAIEFLNDVTFLLENHVLQPEDATTPLRQLYFIAQMILINPEGADQSTSMFRKSIVMLVNCFRNDEVLAELKRIDGLVTQGRAFEALKAIRALYPIEDQILNAQEMTPATVEQIRKEIAPWR.

Belongs to the FlbT family.

Functionally, has a post-transcriptional repressor function in flagellum biogenesis. Associates with the 5'-UTR of fljK mRNA and promotes its degradation. The sequence is that of Probable flagellum biosynthesis repressor protein FlbT from Sinorhizobium medicae (strain WSM419) (Ensifer medicae).